A 47-amino-acid chain; its full sequence is Small, acid-soluble spore protein N (47 aa).

2 stretches are compositionally biased toward polar residues: residues 1 to 11 and 29 to 47; these read MGNPKSNQQPF and KQMQ…TKGE. The disordered stretch occupies residues 1-47; it reads MGNPKSNQQPFVPQHIGTKPREAGGNKGKQMQDQSGQHPQVIQTKGE.

Belongs to the SspN family.

It is found in the spore core. The chain is Small, acid-soluble spore protein N from Anoxybacillus flavithermus (strain DSM 21510 / WK1).